The primary structure comprises 1413 residues: DNA-directed RNA polymerase subunit beta' (1413 aa).

Cysteine 70, cysteine 72, cysteine 85, and cysteine 88 together coordinate Zn(2+). Mg(2+)-binding residues include aspartate 460, aspartate 462, and aspartate 464. Residues cysteine 819, cysteine 893, cysteine 900, and cysteine 903 each coordinate Zn(2+). Residues 1392 to 1413 form a disordered region; that stretch reads EEAFDFGTPSAPAEEPQHPAAE.

It belongs to the RNA polymerase beta' chain family. The RNAP catalytic core consists of 2 alpha, 1 beta, 1 beta' and 1 omega subunit. When a sigma factor is associated with the core the holoenzyme is formed, which can initiate transcription. Mg(2+) is required as a cofactor. It depends on Zn(2+) as a cofactor.

It carries out the reaction RNA(n) + a ribonucleoside 5'-triphosphate = RNA(n+1) + diphosphate. In terms of biological role, DNA-dependent RNA polymerase catalyzes the transcription of DNA into RNA using the four ribonucleoside triphosphates as substrates. The sequence is that of DNA-directed RNA polymerase subunit beta' from Burkholderia orbicola (strain MC0-3).